The primary structure comprises 435 residues: Ribosomal protein uS12 methylthiotransferase RimO (435 aa).

The MTTase N-terminal domain maps to 2 to 118 (KKFHIVKLGC…IVEKIENGEY (117 aa)). Cys11, Cys47, Cys81, Cys150, Cys154, and Cys157 together coordinate [4Fe-4S] cluster. A Radical SAM core domain is found at 136 to 364 (IPDSHYAYVK…MTVQSEISKN (229 aa)). Residues 367 to 435 (EKYIGETLEV…EYDLEGEIVE (69 aa)) form the TRAM domain.

The protein belongs to the methylthiotransferase family. RimO subfamily. [4Fe-4S] cluster serves as cofactor.

Its subcellular location is the cytoplasm. The enzyme catalyses L-aspartate(89)-[ribosomal protein uS12]-hydrogen + (sulfur carrier)-SH + AH2 + 2 S-adenosyl-L-methionine = 3-methylsulfanyl-L-aspartate(89)-[ribosomal protein uS12]-hydrogen + (sulfur carrier)-H + 5'-deoxyadenosine + L-methionine + A + S-adenosyl-L-homocysteine + 2 H(+). Functionally, catalyzes the methylthiolation of an aspartic acid residue of ribosomal protein uS12. This Petrotoga mobilis (strain DSM 10674 / SJ95) protein is Ribosomal protein uS12 methylthiotransferase RimO.